Here is a 52-residue protein sequence, read N- to C-terminus: MAVPKKRTSISKKRIRKNIWKRKGYWTSLKAFSLGKSLSTGNSKSFFVQQNK.

Belongs to the bacterial ribosomal protein bL32 family.

It is found in the plastid. Its subcellular location is the chloroplast. The polypeptide is Large ribosomal subunit protein bL32c (Capsella bursa-pastoris (Shepherd's purse)).